Here is a 930-residue protein sequence, read N- to C-terminus: Nonribosomal peptide synthetase btyA (930 aa).

Residues 31 to 440 (ESPHRLTYAE…RGRSKELICI (410 aa)) form an adenylation (A) domain region. A Carrier domain is found at 570-647 (PAGNETETLL…VLARQLQDGH (78 aa)). Serine 607 bears the O-(pantetheine 4'-phosphoryl)serine mark. The thioesterase (TE) domain stretch occupies residues 667-920 (PLWLIHPIGG…EDNVHKVYRV (254 aa)).

It belongs to the NRP synthetase family.

It catalyses the reaction 2 3-(4-hydroxyphenyl)pyruvate + H(+) = (2S)-2-(4-hydoxybenzyl)-3-(4-hydroxyphenyl)-2-furonol carboxylate + H2O. It functions in the pathway secondary metabolite biosynthesis. Its function is as follows. Nonribosomal peptide synthetase; part of the gene cluster that mediates the biosynthesis of butyrolactones, natural products that show a wide range of biological activities such as antitumor, antiparasitic or anti-inflammatory activity. The nonribosomal peptide synthetase btyA is responsible for the production of butyrolactone II, the core structure of butyrolactones. BtyA first activates 4-hydroxyphenylpyruvate (HPPA) through its A domain to AMP-HPPA. The HPPA unit is then loaded to the T domain and eventually transferred to the TE domain. Upon loading of another HPPA unit to the T domain, the TE domain promotes the enolate formation on the unit attached. Then aldol condensation establishes the carbon-carbon bond between the two units, followed by ester cyclization, and keto-enol tautomerization to yield the gamma-butyrolactone core. Hydrolysis, and finally esterification of the exposed carboxylic acid group yields butyrolactone II. Two additional enzymes, a prenyltransferase and an epoxidase, may be involved in the tailoring modifications of butyrolactone II to give butyrolactone III and butyrolactone I. This Aspergillus terreus (strain NIH 2624 / FGSC A1156) protein is Nonribosomal peptide synthetase btyA.